The sequence spans 414 residues: TnpB-like protein MJ1635 (414 aa).

Zn(2+) is bound by residues Cys-329, Cys-332, Cys-346, and Cys-349.

It in the N-terminal section; belongs to the transposase 2 family. The protein in the C-terminal section; belongs to the transposase 35 family.

In Methanocaldococcus jannaschii (strain ATCC 43067 / DSM 2661 / JAL-1 / JCM 10045 / NBRC 100440) (Methanococcus jannaschii), this protein is TnpB-like protein MJ1635.